Here is a 165-residue protein sequence, read N- to C-terminus: Nucleotide-binding protein PMT9312_0481 (165 aa).

It belongs to the YajQ family.

Its function is as follows. Nucleotide-binding protein. This is Nucleotide-binding protein PMT9312_0481 from Prochlorococcus marinus (strain MIT 9312).